Reading from the N-terminus, the 497-residue chain is C4-dicarboxylate transport protein (497 aa).

A run of 8 helical transmembrane segments spans residues 27-45 (LYVQVLAAIAVGILLGYFY), 60-82 (IMLVKMIIAPVIFLTVATGIAGM), 95-117 (AMIYFLTFSTLALLVGLVVANVV), 168-185 (ILQVLFISVLFGISLAIV), 205-227 (RLVAILMKAAPIGAFGAMAFTIG), 237-259 (LAMLIGTFYLTSFLFVFMVLGAV), 348-370 (ILLLLIAMLSSKGAAGITGAGFI), and 374-393 (ATLSAVPSVPVAGMALILGI). The interval 466–497 (ADRTLAGRPGGRDSRRIAPDHSAQVFGGPLSL) is disordered. A compositionally biased stretch (basic and acidic residues) spans 475–484 (GGRDSRRIAP).

The protein belongs to the dicarboxylate/amino acid:cation symporter (DAACS) (TC 2.A.23) family.

The protein localises to the cell inner membrane. In terms of biological role, responsible for the transport of dicarboxylates such as succinate, fumarate, and malate from the periplasm across the inner membrane. This transport system plays an essential role in the energy supply of tropical rhizobium-legume symbionts. The sequence is that of C4-dicarboxylate transport protein (dctA1) from Sinorhizobium fredii (strain NBRC 101917 / NGR234).